A 359-amino-acid chain; its full sequence is Cytokine receptor-like factor 2 (359 aa).

An N-terminal signal peptide occupies residues 1-19 (MAWALAVILLPRLLAAAAA). The Extracellular portion of the chain corresponds to 20–232 (AAAVTSRGDV…PAPSPALAPP (213 aa)). N-linked (GlcNAc...) asparagine glycosylation is present at Asn-53. A disulfide bridge connects residues Cys-68 and Cys-82. The Fibronectin type-III domain occupies 119–213 (PPWNVTLLWT…WTAVTRLSGA (95 aa)). Asn-122 is a glycosylation site (N-linked (GlcNAc...) asparagine). Intrachain disulfides connect Cys-168–Cys-169 and Cys-181–Cys-219. Residues 201 to 205 (PSEWT) carry the WSXWS motif motif. A helical membrane pass occupies residues 233-253 (LLPLGCGLAALLTLSLLLAAL). The Cytoplasmic portion of the chain corresponds to 254–359 (RLRRVKDALL…MVGDSGYMTL (106 aa)). Positions 262–270 (LLPCVPDPS) match the Box 1 motif motif. A disordered region spans residues 312–336 (KRVEPEDGTSLCTVPRPPSFEPRGP).

Belongs to the type I cytokine receptor family. Type 5 subfamily. As to quaternary structure, the TSLP receptor is a heterodimer of CRLF2 and IL7R. Binding of TSLP to CRLF2/TSLPR is a mechanistic prerequisite for recruitment of IL7R to the high-affinity ternary complex. As to expression, high level of expression in liver, lung and testis. Also expressed in heart, brain, spleen, thymus and bone marrow. Highly expressed in progenitors and myeloid cells. Isoform 2 is expressed in primary hemotopoietic cells.

It localises to the cell membrane. The protein localises to the secreted. Receptor for thymic stromal lymphopoietin (TSLP). Forms a functional complex with TSLP and IL7R which is capable of stimulating cell proliferation through activation of STAT3 and STAT5. Also activates JAK2. Implicated in the development of the hematopoietic system. The protein is Cytokine receptor-like factor 2 (Crlf2) of Mus musculus (Mouse).